A 356-amino-acid chain; its full sequence is Dual-specificity RNA methyltransferase RlmN (356 aa).

Glu-95 serves as the catalytic Proton acceptor. The region spanning 101–332 (EDERGTLCIS…VTVIRDRRGE (232 aa)) is the Radical SAM core domain. An intrachain disulfide couples Cys-108 to Cys-338. 3 residues coordinate [4Fe-4S] cluster: Cys-115, Cys-119, and Cys-122. S-adenosyl-L-methionine contacts are provided by residues 165 to 166 (GE), Ser-197, 219 to 221 (SLH), and Asn-295. The active-site S-methylcysteine intermediate is Cys-338.

This sequence belongs to the radical SAM superfamily. RlmN family. [4Fe-4S] cluster serves as cofactor.

The protein localises to the cytoplasm. The enzyme catalyses adenosine(2503) in 23S rRNA + 2 reduced [2Fe-2S]-[ferredoxin] + 2 S-adenosyl-L-methionine = 2-methyladenosine(2503) in 23S rRNA + 5'-deoxyadenosine + L-methionine + 2 oxidized [2Fe-2S]-[ferredoxin] + S-adenosyl-L-homocysteine. The catalysed reaction is adenosine(37) in tRNA + 2 reduced [2Fe-2S]-[ferredoxin] + 2 S-adenosyl-L-methionine = 2-methyladenosine(37) in tRNA + 5'-deoxyadenosine + L-methionine + 2 oxidized [2Fe-2S]-[ferredoxin] + S-adenosyl-L-homocysteine. Functionally, specifically methylates position 2 of adenine 2503 in 23S rRNA and position 2 of adenine 37 in tRNAs. m2A2503 modification seems to play a crucial role in the proofreading step occurring at the peptidyl transferase center and thus would serve to optimize ribosomal fidelity. This Magnetococcus marinus (strain ATCC BAA-1437 / JCM 17883 / MC-1) protein is Dual-specificity RNA methyltransferase RlmN.